Reading from the N-terminus, the 207-residue chain is MRHRILMLLLGLAVLVTAGCGFNLRGTTQVPPELQKLLLESSDPYGPLTRAIRQQLRLSNVTIVDDPMRKDLPALRIIGSSENQDTVSIFRNGVTAEYQLVLHVQAQVLIPGHDIYPIRVNIFRTFFDNPLTALAKEAEAEVLRQEMRDQAAQQLVRKLLVVHAAEIKNAQENGDTLTSSKRATGAAKMADVEEINIGKPAVSTPAQ.

The first 19 residues, 1 to 19, serve as a signal peptide directing secretion; the sequence is MRHRILMLLLGLAVLVTAG. Residue Cys20 is the site of N-palmitoyl cysteine attachment. Cys20 is lipidated: S-diacylglycerol cysteine.

The protein belongs to the LptE lipoprotein family. Component of the lipopolysaccharide transport and assembly complex. Interacts with LptD.

It is found in the cell outer membrane. In terms of biological role, together with LptD, is involved in the assembly of lipopolysaccharide (LPS) at the surface of the outer membrane. Required for the proper assembly of LptD. Binds LPS and may serve as the LPS recognition site at the outer membrane. The polypeptide is LPS-assembly lipoprotein LptE (Yersinia enterocolitica serotype O:8 / biotype 1B (strain NCTC 13174 / 8081)).